A 42-amino-acid chain; its full sequence is Proline-rich antimicrobial peptide 2 (42 aa).

As to expression, hemolymph.

It localises to the secreted. Its function is as follows. Antimicrobial protein. Has antibacterial activity against the Gram-positive bacterium M.luteus (MIC=8.6 uM). Lacks antibacterial activity against the Gram-positive bacteria B.circulans, L.monocytogenes, S.aureus, and S.lutea, and the Gram-negative bacteria E.coli D31, E.coli ATCC 25922, and S.typhimurium. Lacks antifungal activity against S.cerevisiae, P.pastoris, Z.marxianus, C.albicans, C.fructus, C.wickerhamii, A.niger, F.oxysporum, and T.harizianum. In Galleria mellonella (Greater wax moth), this protein is Proline-rich antimicrobial peptide 2.